Here is a 405-residue protein sequence, read N- to C-terminus: Putative colanic acid biosynthesis glycosyl transferase WcaC (405 aa).

The protein operates within slime biogenesis; slime polysaccharide biosynthesis. The sequence is that of Putative colanic acid biosynthesis glycosyl transferase WcaC (wcaC) from Escherichia coli (strain K12).